The chain runs to 208 residues: Large ribosomal subunit protein uL4 (208 aa).

Residues 45 to 95 (RQGTHKAKTRSEVRGGGKKPFRQKGTGNARQGSSRSPIHVGGGTIFGPQPH) form a disordered region. A compositionally biased stretch (polar residues) spans 69–80 (GTGNARQGSSRS).

This sequence belongs to the universal ribosomal protein uL4 family. Part of the 50S ribosomal subunit.

Its function is as follows. One of the primary rRNA binding proteins, this protein initially binds near the 5'-end of the 23S rRNA. It is important during the early stages of 50S assembly. It makes multiple contacts with different domains of the 23S rRNA in the assembled 50S subunit and ribosome. Functionally, forms part of the polypeptide exit tunnel. This is Large ribosomal subunit protein uL4 from Chlorobium chlorochromatii (strain CaD3).